The primary structure comprises 404 residues: Iron-sulfur assembly protein IscA2 (404 aa).

A coiled-coil region spans residues 244 to 289 (KEEDEKKLDKLLKKRNIKKRDIVTITEEAKEELKKIISINKKENNN).

The protein belongs to the HesB/IscA family. In terms of assembly, dimer. Homotetramer. Interacts with ABCB6.

It localises to the mitochondrion. Its pathway is cofactor biosynthesis; iron-sulfur cluster biosynthesis. Its function is as follows. Participates in iron-sulfur cluster formation (ISC) pathway for iron-sulfur (Fe-S) cluster biogenesis. Can bind and transfer [4Fe-4S] clusters to target apo-proteins. In Plasmodium falciparum (isolate 3D7), this protein is Iron-sulfur assembly protein IscA2.